The chain runs to 481 residues: Glutamate--tRNA ligase (481 aa).

Residues 11–21 carry the 'HIGH' region motif; that stretch reads PSPTGLLHIGN. Positions 255–259 match the 'KMSKS' region motif; the sequence is KLSKR. Residue Lys258 coordinates ATP.

The protein belongs to the class-I aminoacyl-tRNA synthetase family. Glutamate--tRNA ligase type 1 subfamily. Monomer.

Its subcellular location is the cytoplasm. The enzyme catalyses tRNA(Glu) + L-glutamate + ATP = L-glutamyl-tRNA(Glu) + AMP + diphosphate. Its function is as follows. Catalyzes the attachment of glutamate to tRNA(Glu) in a two-step reaction: glutamate is first activated by ATP to form Glu-AMP and then transferred to the acceptor end of tRNA(Glu). This is Glutamate--tRNA ligase from Streptococcus pyogenes serotype M4 (strain MGAS10750).